The sequence spans 119 residues: Single-stranded DNA-binding protein (119 aa).

The region spanning 3 to 102 (INIVTLVGRV…IRVDQLELLG (100 aa)) is the SSB domain.

As to quaternary structure, homotetramer.

This chain is Single-stranded DNA-binding protein (ssb1), found in Anabaena variabilis.